Reading from the N-terminus, the 397-residue chain is Riboflavin biosynthesis protein RibBA (397 aa).

The interval 1-199 is DHBP synthase; sequence MFHRIEEALE…IEDLIAYRRH (199 aa). D-ribulose 5-phosphate-binding positions include 26-27, Asp-31, 138-142, and Glu-162; these read RE and RAGHT. Glu-27 provides a ligand contact to Mg(2+). Residue His-141 participates in Mg(2+) binding. Positions 200–397 are GTP cyclohydrolase II; the sequence is HETFVTKEVE…VTKLGHLLNL (198 aa). 250 to 254 provides a ligand contact to GTP; it reads RVHSE. 3 residues coordinate Zn(2+): Cys-255, Cys-266, and Cys-268. GTP is bound by residues Gln-271, 293 to 295, and Thr-315; that span reads EGR. Asp-327 (proton acceptor; for GTP cyclohydrolase activity) is an active-site residue. Arg-329 acts as the Nucleophile; for GTP cyclohydrolase activity in catalysis. Residues Thr-350 and Lys-355 each contribute to the GTP site.

The protein in the N-terminal section; belongs to the DHBP synthase family. It in the C-terminal section; belongs to the GTP cyclohydrolase II family. The cofactor is Mg(2+). Requires Mn(2+) as cofactor. Zn(2+) is required as a cofactor.

It carries out the reaction D-ribulose 5-phosphate = (2S)-2-hydroxy-3-oxobutyl phosphate + formate + H(+). The enzyme catalyses GTP + 4 H2O = 2,5-diamino-6-hydroxy-4-(5-phosphoribosylamino)-pyrimidine + formate + 2 phosphate + 3 H(+). The protein operates within cofactor biosynthesis; riboflavin biosynthesis; 2-hydroxy-3-oxobutyl phosphate from D-ribulose 5-phosphate: step 1/1. It participates in cofactor biosynthesis; riboflavin biosynthesis; 5-amino-6-(D-ribitylamino)uracil from GTP: step 1/4. Catalyzes the conversion of D-ribulose 5-phosphate to formate and 3,4-dihydroxy-2-butanone 4-phosphate. In terms of biological role, catalyzes the conversion of GTP to 2,5-diamino-6-ribosylamino-4(3H)-pyrimidinone 5'-phosphate (DARP), formate and pyrophosphate. The protein is Riboflavin biosynthesis protein RibBA of Bacillus cytotoxicus (strain DSM 22905 / CIP 110041 / 391-98 / NVH 391-98).